The following is a 703-amino-acid chain: DnaJ homolog subfamily C member 14 (703 aa).

The span at 1–11 (MAQKHPGERRL) shows a compositional bias: basic and acidic residues. The tract at residues 1–229 (MAQKHPGERR…GRHRLARKRS (229 aa)) is disordered. The span at 17 to 28 (SGGTSLSTSGSS) shows a compositional bias: low complexity. The span at 75–84 (HGPPRGPGPP) shows a compositional bias: pro residues. The segment covering 91–102 (DESETGSEESGV) has biased composition (acidic residues). Residues 121–133 (SFLSIPSACNCQG) are compositionally biased toward polar residues. A compositionally biased stretch (acidic residues) spans 163–176 (GEDEELEEEYDDEE). Residues 193 to 202 (PLSRRQKHRF) are compositionally biased toward basic residues. Over residues 203 to 218 (LIKEDVRDSGRREPKA) the composition is skewed to basic and acidic residues. Basic residues predominate over residues 219-228 (PGRHRLARKR). A run of 2 helical transmembrane segments spans residues 305 to 325 (MMFQ…IRIL) and 327 to 347 (VVGA…QLGW). Residues 444 to 508 (NPFHVLGVEA…ERRKEYEMKR (65 aa)) enclose the J domain. Disordered regions lie at residues 622–643 (FGSR…PPAD) and 659–703 (MSNG…PFQR). The segment covering 673 to 684 (GTTSTSRPNSSV) has biased composition (polar residues). Positions 691–703 (PKRRKKVRRPFQR) are enriched in basic residues.

Interacts with the FxxxFxxxF motif of DRD1 via its C-terminal domain.

Its subcellular location is the endoplasmic reticulum membrane. Functionally, regulates the export of target proteins, such as DRD1, from the endoplasmic reticulum to the cell surface. In Mus musculus (Mouse), this protein is DnaJ homolog subfamily C member 14 (Dnajc14).